The following is a 421-amino-acid chain: Medium-chain specific acyl-CoA dehydrogenase, mitochondrial (421 aa).

A mitochondrion-targeting transit peptide spans 1 to 25; that stretch reads MAAMFRRSCRVLRSLSHFGWRSQHT. Lys-79 is subject to N6-acetyllysine. Residue 158–167 coordinates FAD; sequence YCVTEPGAGS. Ser-167 lines the octanoyl-CoA pocket. N6-succinyllysine is present on Lys-179. 191-193 is a binding site for FAD; it reads WIT. N6-acetyllysine; alternate is present on Lys-212. Residue Lys-212 is modified to N6-succinyllysine; alternate. Ser-216 contributes to the octanoyl-CoA binding site. 3 positions are modified to N6-acetyllysine; alternate: Lys-217, Lys-259, and Lys-271. An N6-succinyllysine; alternate mark is found at Lys-217, Lys-259, and Lys-271. Asp-278 is a binding site for octanoyl-CoA. At Lys-279 the chain carries N6-acetyllysine. Residue Arg-281 participates in octanoyl-CoA binding. Lys-301 carries the post-translational modification N6-acetyllysine. Residues 306 to 308 and 316 to 317 each bind FAD; these read RKT and HQ. Residues Arg-349 and Thr-351 each coordinate octanoyl-CoA. At Thr-351 the chain carries Phosphothreonine. 374-378 is an FAD binding site; that stretch reads QVFGG. Residue Glu-401 participates in octanoyl-CoA binding. The active-site Proton acceptor is Glu-401. 402-405 serves as a coordination point for FAD; sequence GTAQ.

The protein belongs to the acyl-CoA dehydrogenase family. In terms of assembly, homotetramer. Interacts with the heterodimeric electron transfer flavoprotein ETF. The cofactor is FAD. Post-translationally, acetylated. Could occur at proximity of the cofactor-binding sites and reduce the catalytic activity. Could be deacetylated by SIRT3.

The protein resides in the mitochondrion matrix. It catalyses the reaction a medium-chain 2,3-saturated fatty acyl-CoA + oxidized [electron-transfer flavoprotein] + H(+) = a medium-chain (2E)-enoyl-CoA + reduced [electron-transfer flavoprotein]. The catalysed reaction is pentanoyl-CoA + oxidized [electron-transfer flavoprotein] + H(+) = (2E)-pentenoyl-CoA + reduced [electron-transfer flavoprotein]. It carries out the reaction hexanoyl-CoA + oxidized [electron-transfer flavoprotein] + H(+) = (2E)-hexenoyl-CoA + reduced [electron-transfer flavoprotein]. The enzyme catalyses octanoyl-CoA + oxidized [electron-transfer flavoprotein] + H(+) = (2E)-octenoyl-CoA + reduced [electron-transfer flavoprotein]. It catalyses the reaction decanoyl-CoA + oxidized [electron-transfer flavoprotein] + H(+) = (2E)-decenoyl-CoA + reduced [electron-transfer flavoprotein]. The catalysed reaction is dodecanoyl-CoA + oxidized [electron-transfer flavoprotein] + H(+) = (2E)-dodecenoyl-CoA + reduced [electron-transfer flavoprotein]. It carries out the reaction tetradecanoyl-CoA + oxidized [electron-transfer flavoprotein] + H(+) = (2E)-tetradecenoyl-CoA + reduced [electron-transfer flavoprotein]. The enzyme catalyses oxidized [electron-transfer flavoprotein] + hexadecanoyl-CoA + H(+) = (2E)-hexadecenoyl-CoA + reduced [electron-transfer flavoprotein]. It functions in the pathway lipid metabolism; mitochondrial fatty acid beta-oxidation. Its function is as follows. Medium-chain specific acyl-CoA dehydrogenase is one of the acyl-CoA dehydrogenases that catalyze the first step of mitochondrial fatty acid beta-oxidation, an aerobic process breaking down fatty acids into acetyl-CoA and allowing the production of energy from fats. The first step of fatty acid beta-oxidation consists in the removal of one hydrogen from C-2 and C-3 of the straight-chain fatty acyl-CoA thioester, resulting in the formation of trans-2-enoyl-CoA. Electron transfer flavoprotein (ETF) is the electron acceptor that transfers electrons to the main mitochondrial respiratory chain via ETF-ubiquinone oxidoreductase (ETF dehydrogenase). Among the different mitochondrial acyl-CoA dehydrogenases, medium-chain specific acyl-CoA dehydrogenase acts specifically on acyl-CoAs with saturated 6 to 12 carbons long primary chains. The sequence is that of Medium-chain specific acyl-CoA dehydrogenase, mitochondrial from Sus scrofa (Pig).